The sequence spans 697 residues: Protein arginine N-methyltransferase 7 (697 aa).

SAM-dependent MTase PRMT-type domains lie at 14–357 and 366–697; these read QNTW…YSLW and EQPA…EETK.

Belongs to the class I-like SAM-binding methyltransferase superfamily. Protein arginine N-methyltransferase family. PRMT7 subfamily.

In terms of biological role, essential arginine methyltransferase that can both catalyze the formation of omega-N monomethylarginine (MMA) and symmetrical dimethylarginine (sDMA). Specifically mediates the symmetrical dimethylation of arginine residues in the small nuclear ribonucleoproteins SmD1 and SmD3. The polypeptide is Protein arginine N-methyltransferase 7 (Art7) (Drosophila virilis (Fruit fly)).